A 128-amino-acid polypeptide reads, in one-letter code: Tachykinin-4 (128 aa).

The N-terminal stretch at 1-16 (MLPLLALLLLIGPSVC) is a signal peptide. The propeptide occupies 17 to 54 (TTAGDREELAFGAEAESWVTVNLKGIPVPSIELKLQEL). The residue at position 66 (M66) is a Methionine amide. Residues 69 to 128 (RVGGYQLGRIVQDLLGTRGLSIEGTCRQAASQQRARPGAVTRESLQSREEDEAPLTTSNV) constitute a propeptide that is removed on maturation. The interval 96 to 128 (QAASQQRARPGAVTRESLQSREEDEAPLTTSNV) is disordered.

This sequence belongs to the tachykinin family. Expressed in hematopoietic cells with highest levels in pre- and pro-B cells but not in later developmental stages. Also detected in uterus, skeletal muscle, brain, spleen, stomach, skin and lactating mammary gland and in cells of myeloid lineage including dendritic and microglial cells and macrophages. In uterus, highest expression is observed in non-pregnant diestrus mice and in day 5 pregnant mice. Compared with mice in diestrus, decreases 2.6-fold in uteri from non-pregnant mice in estrus and 10.2-fold in day 17 pregnant mice. Detected at sites of chronic inflammation such as granulomas.

Its subcellular location is the secreted. In terms of biological role, tachykinins are active peptides which excite neurons, evoke behavioral responses, are potent vasodilators and secretagogues, and contract (directly or indirectly) many smooth muscles. Hemokinin induces plasma extravasation, mast cell degranulation, muscle contraction, salivary secretion and scratching behavior. Increases sperm motility. Induces potent analgesic effects and may play a role in pain modulation. Promotes survival of bone marrow B lineage cells and of cultured LPS-stimulated pre-B cells and may act as an autocrine factor required for B-cell survival and proliferation. Lowers systemic arterial pressure following intravenous injection. Induces interferon-gamma production and may play a role in the inflammatory response. Shows potent affinity and specificity for the NK-1 receptor. The protein is Tachykinin-4 of Mus musculus (Mouse).